The following is a 524-amino-acid chain: MASRMQQPLYILAEGTNRTHGRSAQDSNIRAGKAVAEAVRTTLGPRGMDKMLVDSSGEVVITNDGATILEKMDIEHPAAQMLVEVSQTQEEEVGDGTTTAAVLTGELLAHAEDLLDDDLHPTVIVEGYTEAARIAQDAIDDMVLDVTLDDDLLRKVAESSMTGKGTGDVTADVLAKHVVKAVQMVHEDDNGVFHRDDVRVLTRTGASSSATELVEGVVLDKEPVNENMPRSVSDATVAVLDMKLDVRKSEVDTEYNITSVDQLTAAIDAEDSELRGYAKALADAGVDVVFCTKSIDDRVAGFLADAGILAFKSVKKSDARALARATGAKRLGSLSDLDESDLGRVDAVSIRSFGDDDLAFVEGGAAARAVTLFLRGGTEHVVDELERAIEDAVDVVVAAIDKGGVVPGAGATEIAIADRIRSEAAGIEGRKQLAVEAYADAVEALPRTLAENTGMDPIDALVDLRARYETEGLAGIISSGRSGEIGDPVELGVIDPVAVKREAIESATEAATMIVRIDDVIAAK.

This sequence belongs to the TCP-1 chaperonin family. The thermosome or CCT complex is a oligomeric complex of two octameric double-ring structures; the complex is probably a heterooligomer of CCT1, CCT2 and CCT3 with yet unknown stoichiometry.

In terms of biological role, molecular chaperone that assists in the folding or refolding of nascent or denatured proteins along with ATP hydrolysis. ATPase activity is highest in thermosome assemblies containing CCT1:CCT2, followed by assemblies containing CCT1:CCT2:CCT3. Not required for thermosome ATPase activity. Not required for growth. The sequence is that of Thermosome subunit 3 (cct3) from Haloferax volcanii (strain ATCC 29605 / DSM 3757 / JCM 8879 / NBRC 14742 / NCIMB 2012 / VKM B-1768 / DS2) (Halobacterium volcanii).